Reading from the N-terminus, the 476-residue chain is Angiotensinogen (476 aa).

Residues 1 to 24 (MAPAGVSLRATILCLLAWAGLAAG) form the signal peptide. At Asp-25 the chain carries Beta-decarboxylated aspartate; in form angiotensin-A. Asn-38, Asn-161, Asn-295, and Asn-319 each carry an N-linked (GlcNAc...) asparagine glycan. Residues Cys-42 and Cys-162 are joined by a disulfide bond.

This sequence belongs to the serpin family. As to quaternary structure, during pregnancy, exists as a disulfide-linked 2:2 heterotetramer with the proform of PRG2 and as a complex (probably a 2:2:2 heterohexamer) with pro-PRG2 and C3dg. Post-translationally, beta-decarboxylation of Asp-25 in angiotensin-2, by mononuclear leukocytes produces alanine. The resulting peptide form, angiotensin-A, has the same affinity for the AT1 receptor as angiotensin-2, but a higher affinity for the AT2 receptor. In response to low blood pressure, the enzyme renin/REN cleaves angiotensinogen to produce angiotensin-1. Angiotensin-1 is a substrate of ACE (angiotensin converting enzyme) that removes a dipeptide to yield the physiologically active peptide angiotensin-2. Angiotensin-1 and angiotensin-2 can be further processed to generate angiotensin-3, angiotensin-4. Angiotensin 1-9 is cleaved from angiotensin-1 by ACE2 and can be further processed by ACE to produce angiotensin 1-7, angiotensin 1-5 and angiotensin 1-4. Angiotensin 1-7 has also been proposed to be cleaved from angiotensin-2 by ACE2 or from angiotensin-1 by MME (neprilysin). In terms of processing, the disulfide bond is labile. Angiotensinogen is present in the circulation in a near 40:60 ratio with the oxidized disulfide-bonded form, which preferentially interacts with receptor-bound renin. As to expression, expressed by the liver and secreted in plasma.

It localises to the secreted. In terms of biological role, essential component of the renin-angiotensin system (RAS), a potent regulator of blood pressure, body fluid and electrolyte homeostasis. Acts directly on vascular smooth muscle as a potent vasoconstrictor, affects cardiac contractility and heart rate through its action on the sympathetic nervous system, and alters renal sodium and water absorption through its ability to stimulate the zona glomerulosa cells of the adrenal cortex to synthesize and secrete aldosterone. Acts by binding to angiotensin receptors AGTR1 and AGTR2. Also binds the DEAR/FBXW7-AS1 receptor. Its function is as follows. Stimulates aldosterone release. Functionally, is a ligand for the G-protein coupled receptor MAS1. Has vasodilator and antidiuretic effects. Has an antithrombotic effect that involves MAS1-mediated release of nitric oxide from platelets. The polypeptide is Angiotensinogen (Homo sapiens (Human)).